Here is a 128-residue protein sequence, read N- to C-terminus: Platelet basic protein (128 aa).

The signal sequence occupies residues 1–34 (MSLRLDTTPSCNSARPLHALQVLLLLSLLLTALA). Cystine bridges form between Cys63–Cys89 and Cys65–Cys105.

Belongs to the intercrine alpha (chemokine CxC) family. Beta-thromboglobulin is a homotetramer. In terms of processing, proteolytic removal of residues 1-9 produces the active peptide connective tissue-activating peptide III (CTAP-III) (low-affinity platelet factor IV (LA-PF4)). Proteolytic removal of residues 1-13 produces the active peptide beta-thromboglobulin, which is released from platelets along with platelet factor 4 and platelet-derived growth factor. Post-translationally, NAP-2(1-66) is produced by proteolytical processing, probably after secretion by leukocytes other than neutrophils. In terms of processing, NAP-2(73) and NAP-2(74) seem not be produced by proteolytical processing of secreted precursors but are released in an active form from platelets.

Its subcellular location is the secreted. Functionally, LA-PF4 stimulates DNA synthesis, mitosis, glycolysis, intracellular cAMP accumulation, prostaglandin E2 secretion, and synthesis of hyaluronic acid and sulfated glycosaminoglycan. It also stimulates the formation and secretion of plasminogen activator by human synovial cells. NAP-2 is a ligand for CXCR1 and CXCR2, and NAP-2, NAP-2(73), NAP-2(74), NAP-2(1-66), and most potent NAP-2(1-63) are chemoattractants and activators for neutrophils. TC-1 and TC-2 are antibacterial proteins, in vitro released from activated platelet alpha-granules. CTAP-III(1-81) is more potent than CTAP-III desensitize chemokine-induced neutrophil activation. In Homo sapiens (Human), this protein is Platelet basic protein (PPBP).